The following is a 391-amino-acid chain: 12-oxophytodienoate reductase 3 (391 aa).

Met-1 carries the post-translational modification N-acetylmethionine. An N-acetylthreonine; in 12-oxophytodienoate reductase 3, N-terminally processed modification is found at Thr-2. Residues 31–33 (PMT), Gly-64, and Gln-106 each bind FMN. His-186 serves as a coordination point for substrate. Tyr-191 (proton donor) is an active-site residue. Arg-238 provides a ligand contact to FMN. Arg-284 is a substrate binding site. Residues 320 to 322 (SGG) and 343 to 344 (GR) each bind FMN. Residues 389 to 391 (SRL) carry the Microbody targeting signal motif.

Belongs to the NADH:flavin oxidoreductase/NADH oxidase family. FMN serves as cofactor. Expressed in green seedling, leaves, flowers (anthers, pistil, petal and stamen), and to a lower extent in roots and siliques. Specifically expressed in filament during anther dehiscence initiation.

Its subcellular location is the peroxisome. The catalysed reaction is (1S,2S)-OPC-8 + NADP(+) = (9S,13S,15Z)-12-oxophyto-10,15-dienoate + NADPH + H(+). The protein operates within lipid metabolism; oxylipin biosynthesis. In terms of biological role, specifically cleaves olefinic bonds in cyclic enones. Involved in the biosynthesis of jasmonic acid (JA) and perhaps in biosynthesis or metabolism of other oxylipin signaling moleclules. Required for the spatial and temporal regulation of JA levels during dehiscence of anthers, promoting the stomium degeneration program. In vitro, reduces 9S,13S-12-oxophytodienoic acid (9S,13S-OPDA) and 9R,13R-OPDA to 9S,13S-OPC-8:0 and 9R,13R-OPC-8:0, respectively. Can detoxify the explosive 2,4,6-trinitrotoluene (TNT) in vitro by catalyzing its nitroreduction to form hydroxylamino-dinitrotoluene (HADNT). The protein is 12-oxophytodienoate reductase 3 of Arabidopsis thaliana (Mouse-ear cress).